The sequence spans 288 residues: Formamidopyrimidine-DNA glycosylase (288 aa).

Catalysis depends on Pro2, which acts as the Schiff-base intermediate with DNA. The active-site Proton donor is the Glu3. Catalysis depends on Lys58, which acts as the Proton donor; for beta-elimination activity. DNA contacts are provided by His101, Arg124, and Arg169. The segment at 254-288 (LVYDRAGLPCRVCGTPIRQIVQGQRSTFYCPACQR) adopts an FPG-type zinc-finger fold. Arg278 serves as the catalytic Proton donor; for delta-elimination activity.

The protein belongs to the FPG family. In terms of assembly, monomer. It depends on Zn(2+) as a cofactor.

It catalyses the reaction Hydrolysis of DNA containing ring-opened 7-methylguanine residues, releasing 2,6-diamino-4-hydroxy-5-(N-methyl)formamidopyrimidine.. The catalysed reaction is 2'-deoxyribonucleotide-(2'-deoxyribose 5'-phosphate)-2'-deoxyribonucleotide-DNA = a 3'-end 2'-deoxyribonucleotide-(2,3-dehydro-2,3-deoxyribose 5'-phosphate)-DNA + a 5'-end 5'-phospho-2'-deoxyribonucleoside-DNA + H(+). Involved in base excision repair of DNA damaged by oxidation or by mutagenic agents. Acts as a DNA glycosylase that recognizes and removes damaged bases. Has a preference for oxidized purines, such as 7,8-dihydro-8-oxoguanine (8-oxoG). Has AP (apurinic/apyrimidinic) lyase activity and introduces nicks in the DNA strand. Cleaves the DNA backbone by beta-delta elimination to generate a single-strand break at the site of the removed base with both 3'- and 5'-phosphates. The protein is Formamidopyrimidine-DNA glycosylase of Ralstonia nicotianae (strain ATCC BAA-1114 / GMI1000) (Ralstonia solanacearum).